A 611-amino-acid polypeptide reads, in one-letter code: Lanthanide-dependent methanol dehydrogenase (611 aa).

The N-terminal stretch at 1–34 (MTVKLKKPKKYAVAKNATLLAAFGLIGSLSLAKA) is a signal peptide. Cys-138 and Cys-139 are oxidised to a cystine. Residues Arg-144, Thr-188, Ser-203, Gly-204, and Gly-205 each coordinate pyrroloquinoline quinone. Glu-206 serves as a coordination point for Ce(3+). Glu-206 is a binding site for Eu(3+). Thr-270 and Trp-272 together coordinate pyrroloquinoline quinone. Asn-290, Asp-333, and Asp-335 together coordinate Ce(3+). Residues Asn-290, Asp-333, and Asp-335 each contribute to the Eu(3+) site. Position 360 (Arg-360) interacts with pyrroloquinoline quinone. A disulfide bridge connects residues Cys-414 and Cys-443. The pyrroloquinoline quinone site is built by Trp-501 and Trp-566.

Belongs to the bacterial PQQ dehydrogenase family. In terms of assembly, homodimer. It depends on Ce(3+) as a cofactor. Requires La(3+) as cofactor. Nd(3+) serves as cofactor. The cofactor is Pr(3+). Eu(3+) is required as a cofactor. It depends on pyrroloquinoline quinone as a cofactor.

It is found in the periplasm. The enzyme catalyses 2 Fe(III)-[cytochrome cL] + methanol = 2 Fe(II)-[cytochrome cL] + formaldehyde + 2 H(+). It catalyses the reaction 4 Fe(III)-[cytochrome cL] + methanol + H2O = 4 Fe(II)-[cytochrome cL] + formate + 5 H(+). It carries out the reaction 2 Fe(III)-[cytochrome cL] + a primary alcohol = 2 Fe(II)-[cytochrome cL] + an aldehyde + 2 H(+). The protein operates within one-carbon metabolism; methanol degradation. In terms of biological role, catalyzes the oxidation of methanol to formaldehyde or formate in the presence of lanthanides (Ln). Is a key enzyme in methane/methanol metabolism, allowing M.fumariolicum to grow on methane as the sole carbon and energy source. Can also act on other primary alcohols in vitro, such as ethanol, 1-propanol, 1-butanol, and 1-hexanol, but is not able to oxidize secondary alcohols and acetaldehyde. Uses a specific cytochrome cL, encoded by the adjacent gene in the locus, as electron acceptor. The chain is Lanthanide-dependent methanol dehydrogenase from Methylacidiphilum fumariolicum (strain SolV).